A 79-amino-acid polypeptide reads, in one-letter code: RNA-binding protein Hfq (79 aa).

Positions 10–70 constitute a Sm domain; it reads DVFLNTVRKQ…ISTIMPGQPV (61 aa).

Belongs to the Hfq family. Homohexamer.

Functionally, RNA chaperone that binds small regulatory RNA (sRNAs) and mRNAs to facilitate mRNA translational regulation in response to envelope stress, environmental stress and changes in metabolite concentrations. Also binds with high specificity to tRNAs. The polypeptide is RNA-binding protein Hfq (Bartonella tribocorum (strain CIP 105476 / IBS 506)).